Here is a 97-residue protein sequence, read N- to C-terminus: Large ribosomal subunit protein bL28 (97 aa).

This sequence belongs to the bacterial ribosomal protein bL28 family.

The chain is Large ribosomal subunit protein bL28 from Sphingopyxis alaskensis (strain DSM 13593 / LMG 18877 / RB2256) (Sphingomonas alaskensis).